The primary structure comprises 506 residues: 2,3-bisphosphoglycerate-independent phosphoglycerate mutase (506 aa).

The Mn(2+) site is built by D13 and S63. S63 acts as the Phosphoserine intermediate in catalysis. Substrate is bound by residues H124, R153–D154, R183, R189, R254–R257, and K330. Residues D396, H400, D437, H438, and H456 each coordinate Mn(2+).

Belongs to the BPG-independent phosphoglycerate mutase family. As to quaternary structure, monomer. Requires Mn(2+) as cofactor.

It catalyses the reaction (2R)-2-phosphoglycerate = (2R)-3-phosphoglycerate. Its pathway is carbohydrate degradation; glycolysis; pyruvate from D-glyceraldehyde 3-phosphate: step 3/5. Catalyzes the interconversion of 2-phosphoglycerate and 3-phosphoglycerate. The chain is 2,3-bisphosphoglycerate-independent phosphoglycerate mutase from Cereibacter sphaeroides (strain ATCC 17023 / DSM 158 / JCM 6121 / CCUG 31486 / LMG 2827 / NBRC 12203 / NCIMB 8253 / ATH 2.4.1.) (Rhodobacter sphaeroides).